Consider the following 312-residue polypeptide: Calcium-independent mitochondrial carrier protein SCaMC-3L (312 aa).

Solcar repeat units follow at residues 27-113 (GTLW…SKNF), 121-206 (QLFQ…LQCL), and 217-304 (PSGL…MKKT). Helical transmembrane passes span 33–50 (LLSGAMAGAVSRTGTAPL), 88–107 (GNGINVLKIAPEYAIKFSVC), 131–144 (SLAVAVSQTLINPM), 182–200 (YLPNMLGIIPYACTDLAVY), 219–243 (GLVSLSSVTLSTTCGQMASYPLTLV), and 279–298 (GMTPTLLKVLPAGGISYLVY).

This sequence belongs to the mitochondrial carrier (TC 2.A.29) family. Mainly expressed in testis and at lesser levels in brain.

The protein localises to the mitochondrion inner membrane. The enzyme catalyses Mg(2+)(out) + phosphate(in) + ATP(out) = Mg(2+)(in) + phosphate(out) + ATP(in). It catalyses the reaction ADP(out) + phosphate(in) + H(+)(out) = ADP(in) + phosphate(out) + H(+)(in). Its function is as follows. Calcium-independent ATP-Mg/Pi exchanger that catalyzes the electroneutral exchange of Mg-ATP or free ADP against an hydrogenphosphate and participates in the net transport of adenine nucleotides across the mitochondria inner membrane. This Mus musculus (Mouse) protein is Calcium-independent mitochondrial carrier protein SCaMC-3L.